Reading from the N-terminus, the 139-residue chain is Nucleoside diphosphate kinase (139 aa).

Lysine 11, phenylalanine 59, arginine 87, threonine 93, arginine 104, and asparagine 114 together coordinate ATP. Residue histidine 117 is the Pros-phosphohistidine intermediate of the active site.

The protein belongs to the NDK family. In terms of assembly, homotetramer. Mg(2+) is required as a cofactor.

Its subcellular location is the cytoplasm. It carries out the reaction a 2'-deoxyribonucleoside 5'-diphosphate + ATP = a 2'-deoxyribonucleoside 5'-triphosphate + ADP. The catalysed reaction is a ribonucleoside 5'-diphosphate + ATP = a ribonucleoside 5'-triphosphate + ADP. Functionally, major role in the synthesis of nucleoside triphosphates other than ATP. The ATP gamma phosphate is transferred to the NDP beta phosphate via a ping-pong mechanism, using a phosphorylated active-site intermediate. This Wolbachia sp. subsp. Brugia malayi (strain TRS) protein is Nucleoside diphosphate kinase.